We begin with the raw amino-acid sequence, 151 residues long: Probable cellulase Cel12b (151 aa).

Residues glutamate 50 and glutamate 133 contribute to the active site.

This sequence belongs to the glycosyl hydrolase 12 (cellulase H) family.

Functionally, probable cellulase. Can hydrolyze barley beta-glucan in vitro. Could be important for the survival of M.tuberculosis in the environment, perhaps in amoebal hosts. This is Probable cellulase Cel12b from Mycobacterium tuberculosis (strain ATCC 25618 / H37Rv).